Consider the following 253-residue polypeptide: ER membrane protein complex subunit 3 (253 aa).

Transmembrane regions (helical) follow at residues 10 to 30 (WVLLPISIVMVLTGVLKQYIM), 126 to 146 (FIPQTIIMWWVNHFFAGFILM), and 176 to 196 (SISWYFISVLGLNPVYNLIGL).

The protein belongs to the EMC3 family. As to quaternary structure, component of the ER membrane protein complex (EMC), which is composed of EMC1, EMC2, EMC3, EMC4, EMC5 and EMC6.

Its subcellular location is the endoplasmic reticulum membrane. Functionally, the EMC seems to be required for efficient folding of proteins in the endoplasmic reticulum (ER). The protein is ER membrane protein complex subunit 3 (AIM27) of Saccharomyces cerevisiae (strain RM11-1a) (Baker's yeast).